Here is a 119-residue protein sequence, read N- to C-terminus: Integration host factor subunit alpha (119 aa).

The interval 96–119 is disordered; it reads INGQQANGKMNGESAPSEFSAETE.

It belongs to the bacterial histone-like protein family. In terms of assembly, heterodimer of an alpha and a beta chain.

In terms of biological role, this protein is one of the two subunits of integration host factor, a specific DNA-binding protein that functions in genetic recombination as well as in transcriptional and translational control. This is Integration host factor subunit alpha from Bradyrhizobium sp. (strain ORS 278).